Consider the following 315-residue polypeptide: Porphobilinogen deaminase (315 aa).

C242 is modified (S-(dipyrrolylmethanemethyl)cysteine).

This sequence belongs to the HMBS family. In terms of assembly, monomer. Dipyrromethane is required as a cofactor.

It carries out the reaction 4 porphobilinogen + H2O = hydroxymethylbilane + 4 NH4(+). It participates in porphyrin-containing compound metabolism; protoporphyrin-IX biosynthesis; coproporphyrinogen-III from 5-aminolevulinate: step 2/4. In terms of biological role, tetrapolymerization of the monopyrrole PBG into the hydroxymethylbilane pre-uroporphyrinogen in several discrete steps. This chain is Porphobilinogen deaminase, found in Syntrophotalea carbinolica (strain DSM 2380 / NBRC 103641 / GraBd1) (Pelobacter carbinolicus).